We begin with the raw amino-acid sequence, 714 residues long: MSGFVGVIVSDPWLQSQLTQVELRSLNSKFVALKNQSGKVTLEDLPSVLVKVKSLSSSFKEKEIKEILGGLGSDYESDDDLDFESFLKVYLNLRDKAADKAGGGLKHSSSFLKAGTTTLHTINQSEKGSFVLHINRYLGDDPFLKQFLPLDPDSNDLYELVKDGVLLCKLINIAVPGTIDERAINTKRVLNPWERNENHTLCLNSAKAVGCSVVNIGTQDLAEGRPHLVLGLISQLIKIQLLADLSLKKMPQLVELVEDNEDIEEFLRLPPEKVLLKWMNFHLKKGGYKKTVGNFSSDLKDAQAYAYLLNVLAPEHCDPATLNAEDDLERANMVLEHAERMNCKRYLTAEEIVEGSSYLNLAFVAQIFHERNGLSTDGRFSFAEMMTEDLQTCRDERCYRLWINSLGIESYVNNVFEDVRNGWILLEVVDKVYPGSVNWKQASKPPIKMPFRKVENCNQVVKIGKEMRFSLVNVAGNDIVQGNKKLILGFLWQLMRTHMLQLLKSLRSRTRGKDMTDSEIISWANRKVRIMGRKSQIESFKDKSLSSGLFFLDLLWAVEPRVVNWNLVTKGESDDEKRLNATYIVSVARKLGCSVFLLPEDIVEVNQKMILILTASIMYWSLQQQSSSSESSSSSSDSSSTHSTTTTCTSTCTSTDASPAPSVTGEDEVSSLNGEVSSLTIEEDNEVSSLTIEEDNDADILSDITSISEEAANE.

Positions 7–55 (VIVSDPWLQSQLTQVELRSLNSKFVALKNQSGKVTLEDLPSVLVKVKSL) constitute an EF-hand domain. Calponin-homology (CH) domains lie at 124-241 (QSEK…KIQL), 269-372 (LPPE…HERN), 393-499 (CRDE…RTHM), and 514-622 (DMTD…YWSL). 2 actin-binding regions span residues 124-372 (QSEK…HERN) and 393-622 (CRDE…YWSL). Over residues 628–662 (SSESSSSSSDSSSTHSTTTTCTSTCTSTDASPAPS) the composition is skewed to low complexity. Residues 628-694 (SSESSSSSSD…NEVSSLTIEE (67 aa)) are disordered. Polar residues predominate over residues 670–680 (SSLNGEVSSLT). Over residues 681–694 (IEEDNEVSSLTIEE) the composition is skewed to acidic residues.

In terms of assembly, interacts with F-actin.

The protein resides in the cytoplasm. Its subcellular location is the cytoskeleton. Its function is as follows. Cross-links actin filaments (F-actin). Stabilizes and prevents F-actin depolymerization mediated by profilin. May regulate actin cytoarchitecture, cell cycle, cell division, cell elongation and cytoplasmic tractus. This is Fimbrin-3 from Arabidopsis thaliana (Mouse-ear cress).